The primary structure comprises 126 residues: Holo-[acyl-carrier-protein] synthase (126 aa).

Aspartate 9 and glutamate 58 together coordinate Mg(2+).

The protein belongs to the P-Pant transferase superfamily. AcpS family. The cofactor is Mg(2+).

Its subcellular location is the cytoplasm. It catalyses the reaction apo-[ACP] + CoA = holo-[ACP] + adenosine 3',5'-bisphosphate + H(+). Transfers the 4'-phosphopantetheine moiety from coenzyme A to a Ser of acyl-carrier-protein. The sequence is that of Holo-[acyl-carrier-protein] synthase from Hamiltonella defensa subsp. Acyrthosiphon pisum (strain 5AT).